The chain runs to 88 residues: Small ribosomal subunit protein uS15 (88 aa).

It belongs to the universal ribosomal protein uS15 family. In terms of assembly, part of the 30S ribosomal subunit. Forms a bridge to the 50S subunit in the 70S ribosome, contacting the 23S rRNA.

One of the primary rRNA binding proteins, it binds directly to 16S rRNA where it helps nucleate assembly of the platform of the 30S subunit by binding and bridging several RNA helices of the 16S rRNA. Its function is as follows. Forms an intersubunit bridge (bridge B4) with the 23S rRNA of the 50S subunit in the ribosome. This chain is Small ribosomal subunit protein uS15, found in Psychrobacter arcticus (strain DSM 17307 / VKM B-2377 / 273-4).